The sequence spans 331 residues: Cytosolic 5'-nucleotidase 3A (331 aa).

Residue Asp-83 is the Nucleophile of the active site. Mg(2+) contacts are provided by Asp-83 and Asp-85. Catalysis depends on Asp-85, which acts as the Proton donor. Glu-130 provides a ligand contact to CMP. N(7)-methyl-GMP contacts are provided by Glu-130 and Ser-151. Residues 198 to 200 (SAG) and Lys-247 contribute to the substrate site. Asp-272 is a binding site for Mg(2+). Residue Ser-273 is modified to Phosphoserine.

The protein belongs to the pyrimidine 5'-nucleotidase family. In terms of assembly, monomer. In terms of tissue distribution, isoform 2 is highly expressed in the brain, heart, spleen, kidney and blood. Isoform 2 is expressed (at protein level) in the spleen, skeletal muscle and gastrointestinal epithelia.

It is found in the cytoplasm. The catalysed reaction is N(7)-methyl-GMP + H2O = N(7)-methylguanosine + phosphate. The enzyme catalyses a ribonucleoside 5'-phosphate + H2O = a ribonucleoside + phosphate. Its function is as follows. Nucleotidase which shows specific activity towards cytidine monophosphate (CMP) and 7-methylguanosine monophosphate (m(7)GMP). CMP seems to be the preferred substrate. The polypeptide is Cytosolic 5'-nucleotidase 3A (Nt5c3a) (Mus musculus (Mouse)).